The primary structure comprises 384 residues: Spermidine/putrescine import ATP-binding protein PotA (384 aa).

The ABC transporter domain occupies 6 to 238 (ITFNNVSKTF…PINHFVANFI (233 aa)). ATP is bound at residue 40–47 (GASGSGKS).

The protein belongs to the ABC transporter superfamily. Spermidine/putrescine importer (TC 3.A.1.11.1) family. In terms of assembly, the complex is composed of two ATP-binding proteins (PotA), two transmembrane proteins (PotB and PotC) and a solute-binding protein (PotD).

Its subcellular location is the cell membrane. It carries out the reaction ATP + H2O + polyamine-[polyamine-binding protein]Side 1 = ADP + phosphate + polyamineSide 2 + [polyamine-binding protein]Side 1.. In terms of biological role, part of the ABC transporter complex PotABCD involved in spermidine/putrescine import. Responsible for energy coupling to the transport system. The chain is Spermidine/putrescine import ATP-binding protein PotA from Streptococcus pyogenes serotype M6 (strain ATCC BAA-946 / MGAS10394).